Here is a 261-residue protein sequence, read N- to C-terminus: Expansin-B2 (261 aa).

The signal sequence occupies residues 1–24; it reads MAGASAKVVAMLLSVLATYGFAAG. The 107-residue stretch at 51–157 folds into the Expansin-like EG45 domain; it reads GGACGFKNTN…RRVPCYHRGL (107 aa). 3 disulfide bridges follow: Cys-54-Cys-82, Cys-85-Cys-152, and Cys-90-Cys-96. One can recognise an Expansin-like CBD domain in the interval 170–256; sequence VYLAVLVEFA…NWRANTNYGS (87 aa).

It belongs to the expansin family. Expansin B subfamily. Expressed in roots.

Its subcellular location is the secreted. The protein localises to the cell wall. The protein resides in the membrane. May cause loosening and extension of plant cell walls by disrupting non-covalent bonding between cellulose microfibrils and matrix glucans. No enzymatic activity has been found. May be required for rapid internodal elongation in deepwater rice during submergence. In Oryza sativa subsp. japonica (Rice), this protein is Expansin-B2 (EXPB2).